The primary structure comprises 514 residues: Bifunctional purine biosynthesis protein PurH (514 aa).

The MGS-like domain maps to 1–142; it reads MLALLSVSDK…KNFRHVSVVV (142 aa).

Belongs to the PurH family.

It carries out the reaction (6R)-10-formyltetrahydrofolate + 5-amino-1-(5-phospho-beta-D-ribosyl)imidazole-4-carboxamide = 5-formamido-1-(5-phospho-D-ribosyl)imidazole-4-carboxamide + (6S)-5,6,7,8-tetrahydrofolate. It catalyses the reaction IMP + H2O = 5-formamido-1-(5-phospho-D-ribosyl)imidazole-4-carboxamide. Its pathway is purine metabolism; IMP biosynthesis via de novo pathway; 5-formamido-1-(5-phospho-D-ribosyl)imidazole-4-carboxamide from 5-amino-1-(5-phospho-D-ribosyl)imidazole-4-carboxamide (10-formyl THF route): step 1/1. It participates in purine metabolism; IMP biosynthesis via de novo pathway; IMP from 5-formamido-1-(5-phospho-D-ribosyl)imidazole-4-carboxamide: step 1/1. This is Bifunctional purine biosynthesis protein PurH from Myxococcus xanthus (strain DK1622).